The following is a 294-amino-acid chain: Cytidine deaminase (294 aa).

2 consecutive CMP/dCMP-type deaminase domains span residues 48-168 and 186-294; these read DEDA…FGPK and VSGD…VLLG. 89–91 serves as a coordination point for substrate; sequence NME. His-102 is a binding site for Zn(2+). Residue Glu-104 is the Proton donor of the active site. Zn(2+) is bound by residues Cys-129 and Cys-132.

This sequence belongs to the cytidine and deoxycytidylate deaminase family. In terms of assembly, homodimer. It depends on Zn(2+) as a cofactor.

It catalyses the reaction cytidine + H2O + H(+) = uridine + NH4(+). It carries out the reaction 2'-deoxycytidine + H2O + H(+) = 2'-deoxyuridine + NH4(+). Functionally, this enzyme scavenges exogenous and endogenous cytidine and 2'-deoxycytidine for UMP synthesis. This Klebsiella pneumoniae subsp. pneumoniae (strain ATCC 700721 / MGH 78578) protein is Cytidine deaminase.